The chain runs to 138 residues: Basic phospholipase A2 Cll-N6 (138 aa).

A signal peptide spans 1 to 16; it reads MRTFWIVAVLLVGVEG. Disulfide bonds link Cys-42–Cys-131, Cys-44–Cys-60, Cys-59–Cys-111, Cys-65–Cys-138, Cys-66–Cys-104, Cys-73–Cys-97, and Cys-91–Cys-102. 3 residues coordinate Ca(2+): Tyr-43, Gly-45, and Gly-47. Residue His-63 is part of the active site. Position 64 (Asp-64) interacts with Ca(2+). Asp-105 is a catalytic residue.

In terms of assembly, monomer. Requires Ca(2+) as cofactor. Expressed by the venom gland.

It localises to the secreted. The catalysed reaction is a 1,2-diacyl-sn-glycero-3-phosphocholine + H2O = a 1-acyl-sn-glycero-3-phosphocholine + a fatty acid + H(+). Functionally, snake venom phospholipase A2 (PLA2) that shows myotoxic activities. PLA2 catalyzes the calcium-dependent hydrolysis of the 2-acyl groups in 3-sn-phosphoglycerides. In Crotalus lepidus lepidus (Mottled rock rattlesnake), this protein is Basic phospholipase A2 Cll-N6.